Reading from the N-terminus, the 368-residue chain is Glutamate 5-kinase (368 aa).

Residue Lys13 participates in ATP binding. Substrate-binding residues include Ser54, Asp141, and Asn153. An ATP-binding site is contributed by 173-174 (SD). The PUA domain maps to 278–355 (RGEITVDAGA…AEIEAVLGYP (78 aa)).

It belongs to the glutamate 5-kinase family.

The protein localises to the cytoplasm. The enzyme catalyses L-glutamate + ATP = L-glutamyl 5-phosphate + ADP. It functions in the pathway amino-acid biosynthesis; L-proline biosynthesis; L-glutamate 5-semialdehyde from L-glutamate: step 1/2. In terms of biological role, catalyzes the transfer of a phosphate group to glutamate to form L-glutamate 5-phosphate. This chain is Glutamate 5-kinase, found in Dinoroseobacter shibae (strain DSM 16493 / NCIMB 14021 / DFL 12).